The chain runs to 175 residues: Pathogenesis-related protein 1A1 (175 aa).

A signal peptide spans 1–21 (MKSSIFVACFITFIIFHSSQA). An SCP domain is found at 29–146 (LNAHNAARRR…SGWVFITCNY (118 aa)). Intrachain disulfides connect C65/C135, C108/C114, and C130/C144.

The protein belongs to the CRISP family.

Probably involved in the defense reaction of plants against pathogens. The chain is Pathogenesis-related protein 1A1 from Solanum lycopersicum (Tomato).